The following is a 434-amino-acid chain: Nuclear receptor subfamily 1 group I member 2 (434 aa).

A DNA-binding region (nuclear receptor) is located at residues 38-107 (PQICRVCGDK…RLRKCLESGM (70 aa)). 2 NR C4-type zinc fingers span residues 41 to 61 (CRVC…CEGC) and 77 to 102 (CPFR…LRKC). The short motif at 66-92 (RRAMKRNARLRCPFRKGACEITRKTRR) is the Bipartite nuclear localization signal element. Residues 108–145 (KKEMIMSDEAVEERRALIKRKKSERTGTQPLGVQGLTE) are hinge. Positions 146–433 (EQRMMIRELM…LMQELFGITG (288 aa)) constitute an NR LBD domain. Hyperforin-binding positions include Ser247, 285–288 (QLRF), and His407.

The protein belongs to the nuclear hormone receptor family. NR1 subfamily. As to quaternary structure, heterodimer with RXR. Interacts with NCOA1. Interacts (via domain NR LBD) with CRY1 and CRY2 in a ligand-dependent manner. As to expression, expressed in liver, colon and small intestine.

The protein resides in the nucleus. Nuclear receptor that binds and is activated by variety of endogenous and xenobiotic compounds. Transcription factor that activates the transcription of multiple genes involved in the metabolism and secretion of potentially harmful xenobiotics, drugs and endogenous compounds. Activated by the antibiotic rifampicin and various plant metabolites, such as hyperforin, guggulipid, colupulone, and isoflavones. Response to specific ligands is species-specific. Activated by naturally occurring steroids, such as pregnenolone and progesterone. Binds to a response element in the promoters of the CYP3A4 and ABCB1/MDR1 genes. The sequence is that of Nuclear receptor subfamily 1 group I member 2 (NR1I2) from Homo sapiens (Human).